The following is an 88-amino-acid chain: Apolipoprotein C-I (88 aa).

The first 26 residues, 1-26, serve as a signal peptide directing secretion; that stretch reads MRLFISLPVLIVVLAMALEGPAPAQA.

It belongs to the apolipoprotein C1 family.

It localises to the secreted. In terms of biological role, inhibitor of lipoprotein binding to the low density lipoprotein (LDL) receptor, LDL receptor-related protein, and very low density lipoprotein (VLDL) receptor. Associates with high density lipoproteins (HDL) and the triacylglycerol-rich lipoproteins in the plasma and makes up about 10% of the protein of the VLDL and 2% of that of HDL. Appears to interfere directly with fatty acid uptake and is also the major plasma inhibitor of cholesteryl ester transfer protein (CETP). Modulates the interaction of APOE with beta-migrating VLDL and inhibits binding of beta-VLDL to the LDL receptor-related protein. Binds free fatty acids and reduces their intracellular esterification. The polypeptide is Apolipoprotein C-I (APOC1) (Myodes glareolus (Bank vole)).